A 143-amino-acid polypeptide reads, in one-letter code: Large ribosomal subunit protein uL11 (143 aa).

The protein belongs to the universal ribosomal protein uL11 family. In terms of assembly, part of the ribosomal stalk of the 50S ribosomal subunit. Interacts with L10 and the large rRNA to form the base of the stalk. L10 forms an elongated spine to which L12 dimers bind in a sequential fashion forming a multimeric L10(L12)X complex. One or more lysine residues are methylated.

Forms part of the ribosomal stalk which helps the ribosome interact with GTP-bound translation factors. This chain is Large ribosomal subunit protein uL11, found in Paraburkholderia phytofirmans (strain DSM 17436 / LMG 22146 / PsJN) (Burkholderia phytofirmans).